Here is a 440-residue protein sequence, read N- to C-terminus: Xylose isomerase (440 aa).

Catalysis depends on residues histidine 101 and aspartate 104. Glutamate 232, glutamate 268, histidine 271, aspartate 296, aspartate 307, aspartate 309, and aspartate 339 together coordinate Mg(2+).

This sequence belongs to the xylose isomerase family. In terms of assembly, homotetramer. Mg(2+) is required as a cofactor.

The protein localises to the cytoplasm. It carries out the reaction alpha-D-xylose = alpha-D-xylulofuranose. The chain is Xylose isomerase from Escherichia coli O157:H7.